The primary structure comprises 176 residues: Superoxide oxidase CybB (176 aa).

The Cytoplasmic segment spans residues 1 to 7; that stretch reads MENKYSR. The chain crosses the membrane as a helical span at residues 8-29; it reads LQISIHWLVFLLVIAAYCAMEF. Residue His-13 participates in heme b binding. The Periplasmic portion of the chain corresponds to 30–39; sequence RGFFPRSDRP. A helical membrane pass occupies residues 40 to 64; it reads LINMIHVSCGISILVLMVVRLLLRL. His-45 lines the heme b pocket. Topologically, residues 65-77 are cytoplasmic; the sequence is KYPTPPIIPKPKP. A helical transmembrane segment spans residues 78–103; the sequence is MMTGLAHLGHLVIYLLFIALPVIGLV. Over 104–135 the chain is Periplasmic; that stretch reads MMYNRGNPWFAFGLTMPYASEANFERVDSLKS. A helical transmembrane segment spans residues 136–158; that stretch reads WHETLANLGYFVIGLHAAAALAH. His-137 and His-151 together coordinate heme b. At 159–176 the chain is on the cytoplasmic side; the sequence is HYFWKDNTLLRMMPRKRS.

The protein belongs to the cytochrome b561 family. In terms of assembly, monomer. The cofactor is heme b.

Its subcellular location is the cell inner membrane. It catalyses the reaction a ubiquinol + 2 O2 = 2 superoxide + a ubiquinone + 2 H(+). The catalysed reaction is a menaquinol + 2 O2 = 2 superoxide + a menaquinone + 2 H(+). Its activity is regulated as follows. Quinone binding to the enzyme accelerates the reaction with superoxide. Its function is as follows. B-type di-heme cytochrome. Catalyzes the oxidation of superoxide to molecular oxygen and transfers the extracted electrons to ubiquinone through the two hemes. Can also use menaquinone. The enzyme may be responsible for the detoxification of the superoxide anion produced in the membrane or at its surface. However, it can also efficiently catalyze the formation of superoxide from ubiquinol under physiological conditions. The protein is Superoxide oxidase CybB of Escherichia coli (strain K12).